The sequence spans 626 residues: DNA mismatch repair protein MutL (626 aa).

Disordered regions lie at residues 385–413 and 418–437; these read SGAS…PSMV and LTPS…VAPD.

The protein belongs to the DNA mismatch repair MutL/HexB family.

In terms of biological role, this protein is involved in the repair of mismatches in DNA. It is required for dam-dependent methyl-directed DNA mismatch repair. May act as a 'molecular matchmaker', a protein that promotes the formation of a stable complex between two or more DNA-binding proteins in an ATP-dependent manner without itself being part of a final effector complex. This is DNA mismatch repair protein MutL from Chlorobaculum parvum (strain DSM 263 / NCIMB 8327) (Chlorobium vibrioforme subsp. thiosulfatophilum).